We begin with the raw amino-acid sequence, 341 residues long: Anthranilate phosphoribosyltransferase (341 aa).

5-phospho-alpha-D-ribose 1-diphosphate-binding positions include Gly-79, 82–83 (GD), Thr-87, 89–92 (NIST), 107–115 (KHGNRAVSS), and Ser-119. Gly-79 is an anthranilate binding site. Mg(2+) is bound at residue Ser-91. Asn-110 is a binding site for anthranilate. Arg-165 lines the anthranilate pocket. 2 residues coordinate Mg(2+): Asp-224 and Glu-225.

Belongs to the anthranilate phosphoribosyltransferase family. In terms of assembly, homodimer. The cofactor is Mg(2+).

It carries out the reaction N-(5-phospho-beta-D-ribosyl)anthranilate + diphosphate = 5-phospho-alpha-D-ribose 1-diphosphate + anthranilate. It functions in the pathway amino-acid biosynthesis; L-tryptophan biosynthesis; L-tryptophan from chorismate: step 2/5. Catalyzes the transfer of the phosphoribosyl group of 5-phosphorylribose-1-pyrophosphate (PRPP) to anthranilate to yield N-(5'-phosphoribosyl)-anthranilate (PRA). The chain is Anthranilate phosphoribosyltransferase from Bacillus mycoides (strain KBAB4) (Bacillus weihenstephanensis).